The following is a 439-amino-acid chain: Lipoyl synthase, mitochondrial (439 aa).

Residues 1–37 (MVASARGLRTLHSAHSSISALPASTVPRLQLAVSRCY) constitute a mitochondrion transit peptide. [4Fe-4S] cluster is bound by residues cysteine 150, cysteine 155, cysteine 161, cysteine 181, cysteine 185, cysteine 188, and serine 396. Residues 164–385 (GSSKSAATAT…KERALEMGFL (222 aa)) enclose the Radical SAM core domain.

Belongs to the radical SAM superfamily. Lipoyl synthase family. [4Fe-4S] cluster is required as a cofactor.

It localises to the mitochondrion. The enzyme catalyses [[Fe-S] cluster scaffold protein carrying a second [4Fe-4S](2+) cluster] + N(6)-octanoyl-L-lysyl-[protein] + 2 oxidized [2Fe-2S]-[ferredoxin] + 2 S-adenosyl-L-methionine + 4 H(+) = [[Fe-S] cluster scaffold protein] + N(6)-[(R)-dihydrolipoyl]-L-lysyl-[protein] + 4 Fe(3+) + 2 hydrogen sulfide + 2 5'-deoxyadenosine + 2 L-methionine + 2 reduced [2Fe-2S]-[ferredoxin]. Its pathway is protein modification; protein lipoylation via endogenous pathway; protein N(6)-(lipoyl)lysine from octanoyl-[acyl-carrier-protein]: step 2/2. Functionally, catalyzes the radical-mediated insertion of two sulfur atoms into the C-6 and C-8 positions of the octanoyl moiety bound to the lipoyl domains of lipoate-dependent enzymes, thereby converting the octanoylated domains into lipoylated derivatives. This is Lipoyl synthase, mitochondrial from Paracoccidioides lutzii (strain ATCC MYA-826 / Pb01) (Paracoccidioides brasiliensis).